A 281-amino-acid chain; its full sequence is HTH-type transcriptional activator RhaR (281 aa).

Positions 178-276 (DKLLAALAAS…GMSPGQWRQR (99 aa)) constitute an HTH araC/xylS-type domain. DNA-binding regions (H-T-H motif) lie at residues 195–216 (ERFC…RQQT) and 243–266 (IGDI…SREI).

In terms of assembly, binds DNA as a dimer.

It localises to the cytoplasm. Its function is as follows. Activates expression of the rhaSR operon in response to L-rhamnose. This Klebsiella pneumoniae subsp. pneumoniae (strain ATCC 700721 / MGH 78578) protein is HTH-type transcriptional activator RhaR.